Here is a 423-residue protein sequence, read N- to C-terminus: Putative UPF0496 protein 5 (423 aa).

Positions 1-14 (MGNRHGIMRPRRLA) are enriched in basic residues. Positions 1–37 (MGNRHGIMRPRRLASGRSAAEEEEDGEGEPGSYEAAC) are disordered. A run of 2 helical transmembrane segments spans residues 224–244 (IVFL…AAIA) and 247–267 (PVAA…GKWM).

It belongs to the UPF0496 family.

It is found in the membrane. This is Putative UPF0496 protein 5 from Oryza sativa subsp. japonica (Rice).